The chain runs to 511 residues: Inositol-3-phosphate synthase isozyme 1 (511 aa).

Residues Gly-71, Gly-72, Asn-73, Asn-74, Asp-144, Ile-181, Gln-191, Arg-194, Thr-231, Ala-232, Asn-233, Thr-234, Gly-282, Ser-283, Asp-307, Ser-310, Asn-341, Asn-342, Asp-343, Lys-356, Ala-394, Asp-395, Asp-423, and Ser-424 each contribute to the NAD(+) site.

The protein belongs to the myo-inositol 1-phosphate synthase family. In terms of assembly, homotrimer or homotetramer. Interacts with ATXR5 and ATXR6. Requires NAD(+) as cofactor. As to expression, expressed in siliques, leaves, roots, seed endosperm, but not in embryos. Highest expression in leaves, but restricted to vascular tissue in older leaves.

The protein localises to the cytoplasm. The protein resides in the cytosol. It is found in the nucleus. It catalyses the reaction D-glucose 6-phosphate = 1D-myo-inositol 3-phosphate. It functions in the pathway polyol metabolism; myo-inositol biosynthesis; myo-inositol from D-glucose 6-phosphate: step 1/2. Its function is as follows. Key enzyme in myo-inositol biosynthesis pathway that catalyzes the conversion of glucose 6-phosphate to 1-myo-inositol 1-phosphate in a NAD-dependent manner. Catalyzes the majority of myo-inositol synthesis required for plant growth and development. Acts as a repressor of programmed cell death and protects plant cells against cell death under high light intensity or long days. Controls its own transcription by inhibiting ATXR6 activity. Reduces the deposition of inhibitory histone marks on its own promoter. The polypeptide is Inositol-3-phosphate synthase isozyme 1 (IPS1) (Arabidopsis thaliana (Mouse-ear cress)).